Reading from the N-terminus, the 405-residue chain is Divinyl chlorophyllide a 8-vinyl-reductase, chloroplastic (405 aa).

Residues 1–58 (MAALLLSSHLTAASSSSTTSPTARPAPSFVSFRAANAAPKGARRGWPFLASSVEPPPA) constitute a chloroplast transit peptide.

Its subcellular location is the plastid. The protein resides in the chloroplast. The catalysed reaction is protochlorophyllide a + NADP(+) = 3,8-divinyl protochlorophyllide a + NADPH + H(+). It functions in the pathway porphyrin-containing compound metabolism; chlorophyll biosynthesis. Functionally, catalyzes the conversion of divinyl chlorophyllide to monovinyl chlorophyllide. Reduces the 8-vinyl group of the tetrapyrrole to an ethyl group using NADPH as the reductant. Can use (3,8-divinyl)-chlorophyllide a (DV-Chlidea) &gt; (3,8-divinyl)-chlorophyll a (DV-Chla) &gt; (3,8-divinyl)-protochlorophyllide a (DV-Pchlidea) &gt; (3,8-divinyl)-magnesium-protoporphyrin IX monomethyl ester (DV-MPE) &gt; (3,8-divinyl)-magnesium-protoporphyrin IX (DV-Mg-Proto) as substrates. The polypeptide is Divinyl chlorophyllide a 8-vinyl-reductase, chloroplastic (DVR) (Oryza sativa subsp. indica (Rice)).